Reading from the N-terminus, the 362-residue chain is Neisseria adhesin A (362 aa).

A signal peptide spans 1–23 (MKHFPSKVLTTAILATFCSGALA). A head domain region spans residues 24-169 (ATSDDDVKKA…NIVKIDEKLE (146 aa)). 2 coiled-coil regions span residues 90–146 (VTNL…LNKL) and 183–288 (NDIA…KETR). The tract at residues 170–307 (AVADTVDKHA…SGLFQPYNVG (138 aa)) is coiled stalk domain. 4 consecutive transmembrane segments (beta stranded) span residues 307 to 317 (GRFNVTAAVGG), 321 to 332 (ESAVAIGTGFRF), 339 to 345 (KAGVAVG), and 351 to 362 (SAAYHVGVNYEW). The tract at residues 308–362 (RFNVTAAVGGYKSESAVAIGTGFRFTENFAAKAGVAVGTSSGSSAAYHVGVNYEW) is translocator domain.

It belongs to the autotransporter-2 (AT-2) (TC 1.B.40) family. In terms of assembly, forms high molecular weight oligomers in whole cell extracts that are not disrupted by boiling in SDS buffer. Homotrimer. A fragment containing the N-terminal half of the mature protein (residues 24-210, head domain plus part of the stalk) binds human integrin beta-1 (ITGB1). It was not seen to bind immobilized purified CEACAMs 1, 3, 5, 6 or 8 nor commercially prepared type I collagen, fibronectin or matrigel.

It localises to the cell surface. It is found in the cell outer membrane. Functionally, adheres to and induces bacterial uptake by human epithelial cells. Upon expression in engineered Y.enterocolitica confers an 11- to 15-fold increase in bacterial adherence and uptake by human epithelial cell lines; part of the uptake is mediated by integrin beta-1 (ITGB1) suggesting it may be a human receptor for NadA. A bacterial cell surface protein; antisera against this protein induce complement-mediated killing of this and other strains. This is Neisseria adhesin A from Neisseria meningitidis serogroup B (strain ATCC BAA-335 / MC58).